Here is a 450-residue protein sequence, read N- to C-terminus: Tubulin alpha chain (450 aa).

Position 11 (Q11) interacts with GTP. K40 is modified (N6-acetyllysine). 6 residues coordinate GTP: E71, G144, T145, T179, N206, and N228. E71 lines the Mg(2+) pocket. E254 is a catalytic residue.

It belongs to the tubulin family. In terms of assembly, dimer of alpha and beta chains. A typical microtubule is a hollow water-filled tube with an outer diameter of 25 nm and an inner diameter of 15 nM. Alpha-beta heterodimers associate head-to-tail to form protofilaments running lengthwise along the microtubule wall with the beta-tubulin subunit facing the microtubule plus end conferring a structural polarity. Microtubules usually have 13 protofilaments but different protofilament numbers can be found in some organisms and specialized cells. The cofactor is Mg(2+). Post-translationally, undergoes a tyrosination/detyrosination cycle, the cyclic removal and re-addition of a C-terminal tyrosine residue by the enzymes tubulin tyrosine carboxypeptidase (TTCP) and tubulin tyrosine ligase (TTL), respectively. In terms of processing, acetylation of alpha chains at Lys-40 stabilizes microtubules and affects affinity and processivity of microtubule motors. This modification has a role in multiple cellular functions, ranging from cell motility, cell cycle progression or cell differentiation to intracellular trafficking and signaling.

It is found in the cytoplasm. It localises to the cytoskeleton. The catalysed reaction is GTP + H2O = GDP + phosphate + H(+). Its function is as follows. Tubulin is the major constituent of microtubules, a cylinder consisting of laterally associated linear protofilaments composed of alpha- and beta-tubulin heterodimers. Microtubules grow by the addition of GTP-tubulin dimers to the microtubule end, where a stabilizing cap forms. Below the cap, tubulin dimers are in GDP-bound state, owing to GTPase activity of alpha-tubulin. The polypeptide is Tubulin alpha chain (TUBA) (Prunus dulcis (Almond)).